We begin with the raw amino-acid sequence, 629 residues long: tRNA uridine 5-carboxymethylaminomethyl modification enzyme MnmG (629 aa).

FAD is bound by residues 14–19 (GAGHAG), Val126, and Ser181. 273–287 (GPRYCPSIEDKVVRF) provides a ligand contact to NAD(+). Gln370 provides a ligand contact to FAD.

This sequence belongs to the MnmG family. As to quaternary structure, homodimer. Heterotetramer of two MnmE and two MnmG subunits. It depends on FAD as a cofactor.

The protein resides in the cytoplasm. Its function is as follows. NAD-binding protein involved in the addition of a carboxymethylaminomethyl (cmnm) group at the wobble position (U34) of certain tRNAs, forming tRNA-cmnm(5)s(2)U34. The polypeptide is tRNA uridine 5-carboxymethylaminomethyl modification enzyme MnmG (Bacillus thuringiensis (strain Al Hakam)).